A 311-amino-acid polypeptide reads, in one-letter code: Telomere-binding protein I1 homolog (311 aa).

The protein belongs to the chordopoxvirinae I1 family.

The protein localises to the virion. Late DNA-binding protein which binds to the hairpin form of the viral telomeric sequence. Required for the production of mature virions (MV). This chain is Telomere-binding protein I1 homolog, found in Fowlpox virus (strain NVSL) (FPV).